Consider the following 139-residue polypeptide: Large ribosomal subunit protein uL14 (139 aa).

Belongs to the universal ribosomal protein uL14 family.

This chain is Large ribosomal subunit protein uL14 (RPL23), found in Syntrichia ruralis (Great hairy screw-moss).